The chain runs to 285 residues: Small ribosomal subunit biogenesis GTPase RsgA (285 aa).

Positions Lys-61 to Phe-215 constitute a CP-type G domain. Residues Thr-110–Asp-113 and Gly-159–Ser-167 each bind GTP. The Zn(2+) site is built by Cys-239, Cys-244, His-246, and Cys-254.

This sequence belongs to the TRAFAC class YlqF/YawG GTPase family. RsgA subfamily. In terms of assembly, monomer. Associates with 30S ribosomal subunit, binds 16S rRNA. The cofactor is Zn(2+).

It is found in the cytoplasm. One of several proteins that assist in the late maturation steps of the functional core of the 30S ribosomal subunit. Helps release RbfA from mature subunits. May play a role in the assembly of ribosomal proteins into the subunit. Circularly permuted GTPase that catalyzes slow GTP hydrolysis, GTPase activity is stimulated by the 30S ribosomal subunit. This is Small ribosomal subunit biogenesis GTPase RsgA from Mesomycoplasma hyopneumoniae (strain J / ATCC 25934 / NCTC 10110) (Mycoplasma hyopneumoniae).